Here is a 296-residue protein sequence, read N- to C-terminus: MSDGEEGTPMKHPKPASSVEEAPITTTPFPDLLSSMQAYYGGAAPAAFYASTVGSPSPHPYMWRNQHRFILPYGIPMQYPALFLPGGIFTHPIVPTDPNLAPTSGEVGRKISDEKGRTSAKKSIGVSGSTSFAVDKGAENQKAASSSDNDCPSLSSENGVDGSLEVRSNPLDVAAPGAIVVHDGMLPDQRVNDERELKRQRRKQSNRESARRSRLRKQAKSDELQERLDNLSKENRILRKNLQRISEACAEVTSENHSIKEELLRNYGPDGLTRLPRNLQEAAGELLIEDDTDGET.

3 disordered regions span residues 1-27, 98-165, and 190-223; these read MSDGEEGTPMKHPKPASSVEEAPITTT, PNLA…GSLE, and RVNDERELKRQRRKQSNRESARRSRLRKQAKSDE. The segment covering 107–117 has biased composition (basic and acidic residues); the sequence is VGRKISDEKGR. Residues 145–156 are compositionally biased toward low complexity; the sequence is SSSDNDCPSLSS. A bZIP domain is found at 196–259; sequence ELKRQRRKQS…AEVTSENHSI (64 aa). Positions 198-220 are basic motif; sequence KRQRRKQSNRESARRSRLRKQAK. Residues 224-245 form a leucine-zipper region; that stretch reads LQERLDNLSKENRILRKNLQRI.

Belongs to the bZIP family. In terms of assembly, binds DNA as a dimer.

It is found in the nucleus. Binds to the G-box-like motif (5'-ACGTGGC-3') of the chalcone synthase (CHS) gene promoter. G-box and G-box-like motifs are defined in promoters of certain plant genes which are regulated by such diverse stimuli as light-induction or hormone control. The chain is Light-inducible protein CPRF3 (CPRF3) from Petroselinum crispum (Parsley).